Here is a 334-residue protein sequence, read N- to C-terminus: D-alanine--D-alanine ligase (334 aa).

An ATP-grasp domain is found at 110–306 (KHVLKSLGID…FDHVVDLIVQ (197 aa)). ATP is bound at residue 138 to 190 (LPYPFVIKPVRGGSTIGVHAIFSKSEYLDLSAHADTLEDRMIVEEYVSGQEVQ). Mg(2+)-binding residues include D258, E272, and N274.

This sequence belongs to the D-alanine--D-alanine ligase family. Requires Mg(2+) as cofactor. Mn(2+) is required as a cofactor.

The protein localises to the cytoplasm. The enzyme catalyses 2 D-alanine + ATP = D-alanyl-D-alanine + ADP + phosphate + H(+). Its pathway is cell wall biogenesis; peptidoglycan biosynthesis. Functionally, cell wall formation. This chain is D-alanine--D-alanine ligase, found in Anaplasma marginale (strain Florida).